The following is a 105-amino-acid chain: UPF0145 protein (105 aa).

It belongs to the UPF0145 family.

In Enterococcus faecalis (Streptococcus faecalis), this protein is UPF0145 protein.